A 202-amino-acid polypeptide reads, in one-letter code: Histone chaperone ASF1B (202 aa).

The tract at residues 1 to 155 (MAKVSVLNVA…VTRFHINWDN (155 aa)) is interaction with CHAF1B. The tract at residues 1 to 156 (MAKVSVLNVA…TRFHINWDNN (156 aa)) is interaction with histone H3. Residue Ser-198 is modified to Phosphoserine; by TLK2.

This sequence belongs to the ASF1 family. In terms of assembly, interacts with histone H3 (via C-terminus), including histone H3.1, H3.2 and H3.3, and histone H4; the interaction with H3 is direct. Interacts with the CHAF1A, CHAF1B and RBBP4 subunits of the CAF-1 complex. Interacts with HAT1, NASP and TAF1. Found in a soluble complex with NASP and histones H3 and H4; the interaction with NASP is probably indirect and mediated by H3-H4. Interacts with CDAN1. Found in a cytosolic complex with IPO4 and histones H3 and H4. Interacts with CREBBP. Post-translationally, phosphorylated by TLK1 and TLK2. Highly expressed in testis and at lower levels in colon, small intestine and thymus.

The protein localises to the nucleus. It localises to the cytoplasm. Its subcellular location is the cytosol. Histone chaperone that facilitates histone deposition and histone exchange and removal during nucleosome assembly and disassembly. Cooperates with chromatin assembly factor 1 (CAF-1) to promote replication-dependent chromatin assembly. Also involved in the nuclear import of the histone H3-H4 dimer together with importin-4 (IPO4): specifically recognizes and binds newly synthesized histones with the monomethylation of H3 'Lys-9' (H3K9me1) and diacetylation at 'Lys-5' and 'Lys-12' of H4 (H4K5K12ac) marks in the cytosol. Does not participate in replication-independent nucleosome deposition which is mediated by ASF1A and HIRA. Required for gonad development. This chain is Histone chaperone ASF1B, found in Homo sapiens (Human).